We begin with the raw amino-acid sequence, 192 residues long: Small ribosomal subunit protein uS4B (192 aa).

Residues 83–145 (RRLDNLVYRL…SRKIQTYASN (63 aa)) form the S4 RNA-binding domain.

It belongs to the universal ribosomal protein uS4 family. As to quaternary structure, part of the 30S ribosomal subunit. Contacts protein S5. The interaction surface between S4 and S5 is involved in control of translational fidelity.

One of the primary rRNA binding proteins, it binds directly to 16S rRNA where it nucleates assembly of the body of the 30S subunit. In terms of biological role, with S5 and S12 plays an important role in translational accuracy. This is Small ribosomal subunit protein uS4B (rpsD2) from Clostridium acetobutylicum (strain ATCC 824 / DSM 792 / JCM 1419 / IAM 19013 / LMG 5710 / NBRC 13948 / NRRL B-527 / VKM B-1787 / 2291 / W).